The primary structure comprises 72 residues: Large ribosomal subunit protein bL31 (72 aa).

Residues Cys16, Cys18, Cys38, and Cys41 each coordinate Zn(2+).

Belongs to the bacterial ribosomal protein bL31 family. Type A subfamily. As to quaternary structure, part of the 50S ribosomal subunit. Requires Zn(2+) as cofactor.

Its function is as follows. Binds the 23S rRNA. This is Large ribosomal subunit protein bL31 from Aliivibrio fischeri (strain ATCC 700601 / ES114) (Vibrio fischeri).